We begin with the raw amino-acid sequence, 1358 residues long: Nonribosomal peptide synthetase rstn8 (1358 aa).

Residues 1-23 (MSHSSHYSPVDSGMVPSSSSTED) form a disordered region. An adenylation region spans residues 261–659 (YRELDRLSSR…LGEVEYRLHQ (399 aa)). In terms of domain architecture, Carrier spans 795 to 872 (ETVSPAESTL…DQASLVRPLV (78 aa)). At S832 the chain carries O-(pantetheine 4'-phosphoryl)serine. The tract at residues 909-1322 (EDIYPCTPLQ…DDYSQALHEL (414 aa)) is condensation.

It belongs to the NRP synthetase family. The cofactor is pantetheine 4'-phosphate.

It carries out the reaction restrictinol + glycine + H(+) = restricticin + H2O. It participates in antifungal biosynthesis. Functionally, nonribosomal peptide synthetase; part of the gene cluster that mediates the biosynthesis of the tetrahydropyranyl antifungal agent restricticin that acts as an inhibitor of CYP51 and blocks the ergosterol biosynthesis. Within the pathway, rstn8 catalyzes the C3 esterification of restrictinol with glycine to yield restricticin. Rstn8 represents an example of the emerging class of single-module NRPS-like enzymes that perform esterification reactions. Rstn8 displays strict substrate specificity toward glycine as no other natural amino acid is accepted. Rstn8 does not recognize desmethylrestrictinol as a substrate, demonstrating that rstn1-catalyzed methylation, possibly protecting the C4-OH, must precede the final esterification step. The highly reducing polyketide synthase rstn3, the short chain dehydrogenase rstn4, the cyclase rstn5, the FAD-dependent monooxygenase rstn6 and the enoylreductase rstn7 are required to generate the first stable intermediate desmethylrestrictinol. Rstn3 with rstn7 biosynthesize the first polyketide chain intermediate that is reduced by rstn4, followed by epoxidation by rstn6 before 6-endo cyclization via epoxide opening by rstn5 leads to desmethylrestrictinol. The methyltransferase rstn1 then catalyzes the C4 O-methylation of desmethylrestrictinol to produce restrictinol, and the nonribosomal peptide synthetase rstn8 catalyzes the C3 esterification of restrictinol with glycine that leads to restricticin. This Aspergillus nomiae NRRL (strain ATCC 15546 / NRRL 13137 / CBS 260.88 / M93) protein is Nonribosomal peptide synthetase rstn8.